The sequence spans 170 residues: 6,7-dimethyl-8-ribityllumazine synthase 2 (170 aa).

5-amino-6-(D-ribitylamino)uracil is bound by residues Trp-25, 59 to 61 (AFE), and 83 to 85 (LVV). Arg-91 serves as the catalytic Proton donor. A 5-amino-6-(D-ribitylamino)uracil-binding site is contributed by Ser-116. His-130 serves as a coordination point for (2S)-2-hydroxy-3-oxobutyl phosphate.

The protein belongs to the DMRL synthase family. In terms of assembly, forms an icosahedral capsid composed of 60 subunits, arranged as a dodecamer of pentamers.

It carries out the reaction (2S)-2-hydroxy-3-oxobutyl phosphate + 5-amino-6-(D-ribitylamino)uracil = 6,7-dimethyl-8-(1-D-ribityl)lumazine + phosphate + 2 H2O + H(+). Its pathway is cofactor biosynthesis; riboflavin biosynthesis; riboflavin from 2-hydroxy-3-oxobutyl phosphate and 5-amino-6-(D-ribitylamino)uracil: step 1/2. Its function is as follows. Catalyzes the formation of 6,7-dimethyl-8-ribityllumazine by condensation of 5-amino-6-(D-ribitylamino)uracil with 3,4-dihydroxy-2-butanone 4-phosphate. This is the penultimate step in the biosynthesis of riboflavin. The sequence is that of 6,7-dimethyl-8-ribityllumazine synthase 2 from Pseudomonas syringae pv. tomato (strain ATCC BAA-871 / DC3000).